The primary structure comprises 331 residues: Ribosomal RNA small subunit methyltransferase H (331 aa).

S-adenosyl-L-methionine is bound by residues 38–40 (GGY), aspartate 56, phenylalanine 83, aspartate 100, and glutamine 107. Residues 289 to 331 (AELAENPRARSARLRVGVRTDAPAGKVDPQALGTPLIPKKGRR) are disordered.

This sequence belongs to the methyltransferase superfamily. RsmH family.

It is found in the cytoplasm. It catalyses the reaction cytidine(1402) in 16S rRNA + S-adenosyl-L-methionine = N(4)-methylcytidine(1402) in 16S rRNA + S-adenosyl-L-homocysteine + H(+). In terms of biological role, specifically methylates the N4 position of cytidine in position 1402 (C1402) of 16S rRNA. The sequence is that of Ribosomal RNA small subunit methyltransferase H from Cereibacter sphaeroides (strain ATCC 17029 / ATH 2.4.9) (Rhodobacter sphaeroides).